The chain runs to 131 residues: MAVKIRLKRMGQIRAPFYRIVVADSRNKRDGRSIEEIGLYNPMTDPSTIEVKSERVQYWLGVGAQPTEQVAALLKVTGDWQKFKGLPGAEGTYRVPTANTKPPRIPGGGAAKAVEAPAEAPAEAETPASES.

A disordered region spans residues 87–131 (PGAEGTYRVPTANTKPPRIPGGGAAKAVEAPAEAPAEAETPASES). Over residues 111–131 (AKAVEAPAEAPAEAETPASES) the composition is skewed to low complexity.

This sequence belongs to the bacterial ribosomal protein bS16 family.

In Kineococcus radiotolerans (strain ATCC BAA-149 / DSM 14245 / SRS30216), this protein is Small ribosomal subunit protein bS16.